The following is a 951-amino-acid chain: Coiled-coil domain-containing protein 15 (951 aa).

Coiled coils occupy residues 64–89 (LIEE…QVKY), 154–193 (DGIE…VIKK), 782–813 (MDIE…EQEC), and 839–874 (LAQL…IQEK).

In terms of assembly, interacts with POC5, POC1B, CETN2 and FAM161A.

It localises to the cytoplasm. The protein resides in the cytoskeleton. The protein localises to the microtubule organizing center. Its subcellular location is the centrosome. It is found in the centriole. It localises to the centriolar satellite. In terms of biological role, plays an important role in primary cilium assembly, maintenance, and length regulation. Interacts with centriole inner scaffold proteins to promote proper centriole size and integrity and assembly of functional cilia. Required for the recruitment of both the inner scaffold protein POC1B and the distal SFI1/CETN2 complex to centrioles. The protein is Coiled-coil domain-containing protein 15 (CCDC15) of Homo sapiens (Human).